The primary structure comprises 393 residues: MIDEKLKGYIDKRLNEIKDKIPDKLHEDLRAAIMDINGVELTEEDIDRIIDLTIREYQQSLIEPGEAIGVVTAQSVGEPGTQMTLRTFHFAGIRELNVTLGLPRLIEIVDARKVPSTPMMTIYLTDEYKTDKDKALDIARRIEYTRVENVVSSVSVDISNMSITLQFDQEMLKDKGVSIEEIKKIITKLKLGEIRIEDNDEYSFTIYFEKIDSIMALFKMREKILNTKIKGVKGIKRAIVQKKGDEYVIITDGSNLEGIMNVTGVDINKIQTNNIHEVEEVLGIEAARELISREIKKVLEEQGLDVDMRHIVLVSDIMTRTGDIRQIGRHGVTGEKSSVLARAAFEVTVKHLLDAAARGEREEFKGVIENIIIGQPIRLGTGIVELTMKPNMR.

Belongs to the RNA polymerase beta' chain family. As to quaternary structure, part of the 13-subunit RNA polymerase complex. Interacts with TFS4.

It localises to the cytoplasm. It carries out the reaction RNA(n) + a ribonucleoside 5'-triphosphate = RNA(n+1) + diphosphate. In terms of biological role, DNA-dependent RNA polymerase (RNAP) catalyzes the transcription of DNA into RNA using the four ribonucleoside triphosphates as substrates. Forms part of the jaw domain. Its function is as follows. Reconstitution experiments show this subunit is required for basic activity. The chain is DNA-directed RNA polymerase subunit Rpo1C from Sulfolobus acidocaldarius (strain ATCC 33909 / DSM 639 / JCM 8929 / NBRC 15157 / NCIMB 11770).